The following is a 232-amino-acid chain: Biosynthetic peptidoglycan transglycosylase (232 aa).

The chain crosses the membrane as a helical span at residues 12–31 (YLLWFMAASVVLVAVLRWVP).

This sequence belongs to the glycosyltransferase 51 family.

The protein resides in the cell inner membrane. The enzyme catalyses [GlcNAc-(1-&gt;4)-Mur2Ac(oyl-L-Ala-gamma-D-Glu-L-Lys-D-Ala-D-Ala)](n)-di-trans,octa-cis-undecaprenyl diphosphate + beta-D-GlcNAc-(1-&gt;4)-Mur2Ac(oyl-L-Ala-gamma-D-Glu-L-Lys-D-Ala-D-Ala)-di-trans,octa-cis-undecaprenyl diphosphate = [GlcNAc-(1-&gt;4)-Mur2Ac(oyl-L-Ala-gamma-D-Glu-L-Lys-D-Ala-D-Ala)](n+1)-di-trans,octa-cis-undecaprenyl diphosphate + di-trans,octa-cis-undecaprenyl diphosphate + H(+). It participates in cell wall biogenesis; peptidoglycan biosynthesis. In terms of biological role, peptidoglycan polymerase that catalyzes glycan chain elongation from lipid-linked precursors. The sequence is that of Biosynthetic peptidoglycan transglycosylase from Pseudomonas aeruginosa (strain ATCC 15692 / DSM 22644 / CIP 104116 / JCM 14847 / LMG 12228 / 1C / PRS 101 / PAO1).